A 425-amino-acid chain; its full sequence is Adenylosuccinate synthetase (425 aa).

GTP-binding positions include 12–18 and 40–42; these read GDEGKGK and GHT. Residue Asp-13 is the Proton acceptor of the active site. Mg(2+) is bound by residues Asp-13 and Gly-40. Residues 13 to 16, 38 to 41, Thr-126, Arg-140, Gln-221, Thr-236, and Arg-300 each bind IMP; these read DEGK and NAGH. The active-site Proton donor is the His-41. Residue 296-302 coordinates substrate; it reads ATTGRPR. GTP contacts are provided by residues Arg-302, 328–330, and 410–412; these read KLD and STG.

Belongs to the adenylosuccinate synthetase family. In terms of assembly, homodimer. Mg(2+) is required as a cofactor.

It is found in the cytoplasm. The catalysed reaction is IMP + L-aspartate + GTP = N(6)-(1,2-dicarboxyethyl)-AMP + GDP + phosphate + 2 H(+). The protein operates within purine metabolism; AMP biosynthesis via de novo pathway; AMP from IMP: step 1/2. Functionally, plays an important role in the de novo pathway of purine nucleotide biosynthesis. Catalyzes the first committed step in the biosynthesis of AMP from IMP. The chain is Adenylosuccinate synthetase from Thermodesulfovibrio yellowstonii (strain ATCC 51303 / DSM 11347 / YP87).